A 984-amino-acid polypeptide reads, in one-letter code: Hyaluronate lyase (984 aa).

Polar residues-rich tracts occupy residues 1 to 12 (MKQVVDNQTQNK), 19 to 32 (DFNQ…SWSH), and 54 to 66 (IQRT…SLSS). 2 disordered regions span residues 1-32 (MKQV…SWSH) and 49-68 (DKSP…SSDK). Residues 1–40 (MKQVVDNQTQNKELVKNGDFNQTNPVSGSWSHTSAREWSA) form the signal peptide. Residues asparagine 429, histidine 479, and tyrosine 488 contribute to the active site. Basic and acidic residues predominate over residues 701 to 726 (TEKDAKREDTTKEFMSKHSKDAKEKT). Residues 701–728 (TEKDAKREDTTKEFMSKHSKDAKEKTGQ) are disordered.

It belongs to the polysaccharide lyase 8 family.

The protein localises to the secreted. It catalyses the reaction [hyaluronan](n) = n 3-(4-deoxy-beta-D-gluc-4-enuronosyl)-N-acetyl-D-glucosamine + H2O. In Streptococcus agalactiae serotype III (strain NEM316), this protein is Hyaluronate lyase.